We begin with the raw amino-acid sequence, 2136 residues long: Protein Ycf2 (2136 aa).

Position 1404–1411 (1404–1411) interacts with ATP; that stretch reads GPIETGRS.

This sequence belongs to the Ycf2 family.

It is found in the plastid. The protein localises to the chloroplast stroma. Probable ATPase of unknown function. Its presence in a non-photosynthetic plant (Epifagus virginiana) and experiments in tobacco indicate that it has an essential function which is probably not related to photosynthesis. This chain is Protein Ycf2, found in Marchantia polymorpha (Common liverwort).